Reading from the N-terminus, the 418-residue chain is Actin-related protein 3 (418 aa).

N-acetylalanine is present on Ala-2.

This sequence belongs to the actin family. ARP3 subfamily. In terms of assembly, component of the Arp2/3 complex composed of ACTR2/ARP2, ACTR3/ARP3, ARPC1B/p41-ARC, ARPC2/p34-ARC, ARPC3/p21-ARC, ARPC4/p20-ARC and ARPC5/p16-ARC. As to expression, detected in fibroblasts.

The protein resides in the cytoplasm. It localises to the cytoskeleton. Its subcellular location is the cell projection. The protein localises to the nucleus. ATP-binding component of the Arp2/3 complex, a multiprotein complex that mediates actin polymerization upon stimulation by nucleation-promoting factor (NPF). The Arp2/3 complex mediates the formation of branched actin networks in the cytoplasm, providing the force for cell motility. Seems to contact the pointed end of the daughter actin filament. In addition to its role in the cytoplasmic cytoskeleton, the Arp2/3 complex also promotes actin polymerization in the nucleus, thereby regulating gene transcription and repair of damaged DNA. The Arp2/3 complex promotes homologous recombination (HR) repair in response to DNA damage by promoting nuclear actin polymerization, leading to drive motility of double-strand breaks (DSBs). This Gallus gallus (Chicken) protein is Actin-related protein 3 (ACTR3).